We begin with the raw amino-acid sequence, 137 residues long: uncharacterized protein (137 aa).

The helical transmembrane segment at 116–136 (YLSIANLATLLLFGIIGLSII) threads the bilayer.

The protein localises to the host membrane. This is an uncharacterized protein from His1 virus (isolate Australia/Victoria) (His1V).